Here is a 460-residue protein sequence, read N- to C-terminus: Putative RNA-guided DNA endonuclease MT2953 (460 aa).

Active-site residues include aspartate 224 and glutamate 313. Zn(2+) contacts are provided by cysteine 372, cysteine 375, cysteine 389, and cysteine 392. The active site involves aspartate 399. Residues 415 to 460 (VVGPVGAAVKRGADRKTGPGPAGGREARKATGHPAGEQPRDGVQVK) form a disordered region.

It in the N-terminal section; belongs to the transposase 2 family. This sequence in the C-terminal section; belongs to the transposase 35 family.

An RNA-guided dsDNA endonuclease. When guided by an RNA derived from the right-end element of its insertion sequence element (IS), cleaves DNA downstream of the transposon-associated motif (TAM). Cleaves supercoiled and linear DNA in a staggered manner 15-21 bases from the TAM yielding 5'-overhangs. Binds reRNA, an approximately 150 nucleotide base sRNA derived from the 3' end of its own gene, the right end (RE) of the insertion sequence (IS) plus sequence downstream of the IS. The protein is Putative RNA-guided DNA endonuclease MT2953 of Mycobacterium tuberculosis (strain CDC 1551 / Oshkosh).